A 265-amino-acid chain; its full sequence is uncharacterized protein (265 aa).

2 disordered regions span residues 62-94 and 118-149; these read RNKKKEEKKGKGLMTARGGNRRDTETSQQALGK and MVPGSYIKDGPKKSDTDIKDAVDPESTQRPNP. Residues 126–139 show a composition bias toward basic and acidic residues; sequence DGPKKSDTDIKDAV.

This is an uncharacterized protein from Homo sapiens (Human).